The primary structure comprises 281 residues: MSRPAGRTDWAEEDDETELALPSQTVVKNKDGSETITTYRVGEDGRRYKTTRRIKKTVIKTTVNPRVAERKQWAKFGQEKGKPAGPQTDTVSVAENILFRPVAAWKASNEDKGDEAKKKAELKNAKIKCRICQGDHFTTKCPFKDTMAPEGDVAPADMPDDAPGSASGGLGAGGGGYVPPHLRGRAGAGEKMGGKFDRDDSATLRVTNVSEFAEEQDLRDMFSRYGHVTRVFLAKDRETGRAKGFAFVSYADRTDAAKACEKMDGFGFGHLILRVEFAKKA.

The interval 1–32 (MSRPAGRTDWAEEDDETELALPSQTVVKNKDG) is disordered. One can recognise an RRM domain in the interval 202–280 (ATLRVTNVSE…LILRVEFAKK (79 aa)).

Belongs to the eIF-3 subunit G family. Component of the eukaryotic translation initiation factor 3 (eIF-3) complex.

It localises to the cytoplasm. RNA-binding component of the eukaryotic translation initiation factor 3 (eIF-3) complex, which is involved in protein synthesis of a specialized repertoire of mRNAs and, together with other initiation factors, stimulates binding of mRNA and methionyl-tRNAi to the 40S ribosome. The eIF-3 complex specifically targets and initiates translation of a subset of mRNAs involved in cell proliferation. This subunit can bind 18S rRNA. The protein is Eukaryotic translation initiation factor 3 subunit G of Phaeosphaeria nodorum (strain SN15 / ATCC MYA-4574 / FGSC 10173) (Glume blotch fungus).